The sequence spans 342 residues: Dihydroorotate dehydrogenase (quinone) (342 aa).

Residues 61 to 65 and T85 contribute to the FMN site; that span reads AGLDK. K65 is a binding site for substrate. 110-114 provides a ligand contact to substrate; sequence NRMGF. FMN is bound by residues N138 and N171. N171 serves as a coordination point for substrate. Residue S174 is the Nucleophile of the active site. Residue N176 participates in substrate binding. Positions 216 and 244 each coordinate FMN. Position 245–246 (245–246) interacts with substrate; sequence NT. FMN contacts are provided by residues G267, G296, and 317 to 318; that span reads YS.

It belongs to the dihydroorotate dehydrogenase family. Type 2 subfamily. Monomer. FMN serves as cofactor.

It localises to the cell membrane. The catalysed reaction is (S)-dihydroorotate + a quinone = orotate + a quinol. The protein operates within pyrimidine metabolism; UMP biosynthesis via de novo pathway; orotate from (S)-dihydroorotate (quinone route): step 1/1. Catalyzes the conversion of dihydroorotate to orotate with quinone as electron acceptor. The chain is Dihydroorotate dehydrogenase (quinone) from Pseudomonas paraeruginosa (strain DSM 24068 / PA7) (Pseudomonas aeruginosa (strain PA7)).